Here is a 122-residue protein sequence, read N- to C-terminus: Small ribosomal subunit protein uS13 (122 aa).

The tract at residues 93-122 (RLSLPVRGQRTKTNSRTRKGKRKTVAGKKK) is disordered. Over residues 101–122 (QRTKTNSRTRKGKRKTVAGKKK) the composition is skewed to basic residues.

The protein belongs to the universal ribosomal protein uS13 family. As to quaternary structure, part of the 30S ribosomal subunit. Forms a loose heterodimer with protein S19. Forms two bridges to the 50S subunit in the 70S ribosome.

In terms of biological role, located at the top of the head of the 30S subunit, it contacts several helices of the 16S rRNA. In the 70S ribosome it contacts the 23S rRNA (bridge B1a) and protein L5 of the 50S subunit (bridge B1b), connecting the 2 subunits; these bridges are implicated in subunit movement. Contacts the tRNAs in the A and P-sites. In Chlamydia abortus (strain DSM 27085 / S26/3) (Chlamydophila abortus), this protein is Small ribosomal subunit protein uS13.